The sequence spans 194 residues: E3 ubiquitin-protein ligase RNF4 (194 aa).

A compositionally biased stretch (basic residues) spans 1-12; sequence MSTRNPQRKRRG. The segment at 1–20 is required for ubiquitination activity; the sequence is MSTRNPQRKRRGGTVNSRQT. The tract at residues 1 to 39 is disordered; the sequence is MSTRNPQRKRRGGTVNSRQTQKRTRETTSTPEVSLETEP. Positions 6–65 are mediates interaction with TRPS1; it reads PQRKRRGGTVNSRQTQKRTRETTSTPEVSLETEPIELVETVGDEIVDLTCESLEPVVVDL. Positions 40 to 43 match the SUMO interaction motif 1; mediates the binding to polysumoylated substrates motif; the sequence is IELV. The short motif at 50-53 is the SUMO interaction motif 2; mediates the binding to polysumoylated substrates element; that stretch reads IVDL. The SUMO interaction motif 3; mediates the binding to polysumoylated substrates motif lies at 61–63; it reads VVV. Residues 71 to 74 carry the SUMO interaction motif 4; mediates the binding to polysumoylated substrates motif; it reads VVIV. 2 positions are modified to phosphoserine: S98 and S99. The tract at residues 110-130 is disordered; it reads VYVTTHTPRSTKDDGATGPRP. Residues C136, C139, C158, H160, C163, C166, C177, and C180 each coordinate Zn(2+). Residues 136-181 form an RING-type zinc finger; it reads CPICMDGYSEIVQNGRLIVSTECGHVFCSQCLRDSLKNANTCPTCR.

In terms of assembly, homodimer (via RING-type zinc finger domain). Interacts with GSC2. Interacts with AR/the androgen receptor and TBP. Interacts with TCF20. Interacts with PATZ1. Interacts with TRPS1; negatively regulates TRPS1 transcriptional repressor activity. Interacts with PML (isoform PML-1, isoform PML-2, isoform PML-3, isoform PML-4, isoform PML-5 and isoform PML-6). Interacts with PRDM1/Blimp-1. Post-translationally, sumoylated; conjugated by one or two SUMO1 moieties. In terms of processing, autoubiquitinated. In terms of tissue distribution, in the embryo, expressed primarily in the developing nervous system with strong expression in the dorsal root ganglia and gonads. Ubiquitously expressed in the adult.

It localises to the cytoplasm. It is found in the nucleus. Its subcellular location is the PML body. It catalyses the reaction S-ubiquitinyl-[E2 ubiquitin-conjugating enzyme]-L-cysteine + [acceptor protein]-L-lysine = [E2 ubiquitin-conjugating enzyme]-L-cysteine + N(6)-ubiquitinyl-[acceptor protein]-L-lysine.. The protein operates within protein modification; protein ubiquitination. Its function is as follows. E3 ubiquitin-protein ligase which binds polysumoylated chains covalently attached to proteins and mediates 'Lys-6'-, 'Lys-11'-, 'Lys-48'- and 'Lys-63'-linked polyubiquitination of those substrates and their subsequent targeting to the proteasome for degradation. Regulates the degradation of several proteins including PML and the transcriptional activator PEA3. Involved in chromosome alignment and spindle assembly, it regulates the kinetochore CENPH-CENPI-CENPK complex by targeting polysumoylated CENPI to proteasomal degradation. Regulates the cellular responses to hypoxia and heat shock through degradation of respectively EPAS1 and PARP1. Alternatively, it may also bind DNA/nucleosomes and have a more direct role in the regulation of transcription for instance enhancing basal transcription and steroid receptor-mediated transcriptional activation. Catalyzes ubiquitination of sumoylated PARP1 in response to PARP1 trapping to chromatin, leading to PARP1 removal from chromatin by VCP/p97. The polypeptide is E3 ubiquitin-protein ligase RNF4 (Mus musculus (Mouse)).